A 339-amino-acid chain; its full sequence is Dihydroorotate dehydrogenase (quinone) (339 aa).

FMN is bound by residues 62–66 (AGMDK) and Thr-86. Lys-66 is a substrate binding site. A substrate-binding site is contributed by 111–115 (NRMGF). FMN is bound by residues Asn-139 and Asn-172. A substrate-binding site is contributed by Asn-172. Ser-175 functions as the Nucleophile in the catalytic mechanism. Position 177 (Asn-177) interacts with substrate. FMN is bound by residues Lys-217 and Thr-245. 246–247 (NT) provides a ligand contact to substrate. FMN is bound by residues Gly-268, Gly-297, and 318-319 (YS).

The protein belongs to the dihydroorotate dehydrogenase family. Type 2 subfamily. In terms of assembly, monomer. FMN is required as a cofactor.

It localises to the cell membrane. It carries out the reaction (S)-dihydroorotate + a quinone = orotate + a quinol. It participates in pyrimidine metabolism; UMP biosynthesis via de novo pathway; orotate from (S)-dihydroorotate (quinone route): step 1/1. In terms of biological role, catalyzes the conversion of dihydroorotate to orotate with quinone as electron acceptor. This chain is Dihydroorotate dehydrogenase (quinone), found in Shewanella sp. (strain ANA-3).